A 66-amino-acid chain; its full sequence is Large ribosomal subunit protein bL35 (66 aa).

The span at 1–16 (MPKQKTHRASAKRFKR) shows a compositional bias: basic residues. Residues 1 to 22 (MPKQKTHRASAKRFKRTGSGGL) are disordered.

This sequence belongs to the bacterial ribosomal protein bL35 family.

The protein is Large ribosomal subunit protein bL35 of Streptococcus suis (strain 05ZYH33).